Consider the following 362-residue polypeptide: Ferredoxin--NADP reductase, leaf-type isozyme, chloroplastic (362 aa).

Residues 1–20 (MATAVSAAVSLPSSKSTSFS) form a disordered region. Residues 1 to 62 (MATAVSAAVS…RAQVTTEAPA (62 aa)) constitute a chloroplast transit peptide. The segment covering 10 to 20 (SLPSSKSTSFS) has biased composition (low complexity). The region spanning 83–205 (KEPYVGRCLL…TGPVGKEMLM (123 aa)) is the FAD-binding FR-type domain. FAD is bound by residues 141–144 (RLYS), 162–164 (CVK), Tyr-168, 179–181 (VCS), and Thr-220. NADP(+) is bound by residues Ser-144 and Lys-164. Residues Thr-220, 252-253 (VP), 282-283 (SR), Lys-292, 321-322 (GL), and Glu-360 each bind NADP(+).

It belongs to the ferredoxin--NADP reductase type 1 family. FAD serves as cofactor.

The protein localises to the plastid. It is found in the chloroplast stroma. The protein resides in the chloroplast thylakoid membrane. The enzyme catalyses 2 reduced [2Fe-2S]-[ferredoxin] + NADP(+) + H(+) = 2 oxidized [2Fe-2S]-[ferredoxin] + NADPH. Its pathway is energy metabolism; photosynthesis. Functionally, may play a key role in regulating the relative amounts of cyclic and non-cyclic electron flow to meet the demands of the plant for ATP and reducing power. This chain is Ferredoxin--NADP reductase, leaf-type isozyme, chloroplastic (PETH), found in Nicotiana tabacum (Common tobacco).